The sequence spans 360 residues: 3-dehydroquinate synthase (360 aa).

NAD(+) contacts are provided by residues 70-75 (DGESLK), 128-129 (TT), lysine 141, and lysine 150. The Zn(2+) site is built by glutamate 182, histidine 243, and histidine 259.

It belongs to the sugar phosphate cyclases superfamily. Dehydroquinate synthase family. It depends on NAD(+) as a cofactor. The cofactor is Co(2+). Zn(2+) is required as a cofactor.

The protein localises to the cytoplasm. The catalysed reaction is 7-phospho-2-dehydro-3-deoxy-D-arabino-heptonate = 3-dehydroquinate + phosphate. It functions in the pathway metabolic intermediate biosynthesis; chorismate biosynthesis; chorismate from D-erythrose 4-phosphate and phosphoenolpyruvate: step 2/7. In terms of biological role, catalyzes the conversion of 3-deoxy-D-arabino-heptulosonate 7-phosphate (DAHP) to dehydroquinate (DHQ). The polypeptide is 3-dehydroquinate synthase (Thermoplasma volcanium (strain ATCC 51530 / DSM 4299 / JCM 9571 / NBRC 15438 / GSS1)).